The sequence spans 329 residues: tRNA uridine(34) hydroxylase (329 aa).

One can recognise a Rhodanese domain in the interval 123–217 (SDPETVLIDT…YLEEVPKEKS (95 aa)). Cysteine 177 functions as the Cysteine persulfide intermediate in the catalytic mechanism. Positions 310–329 (LNKQKKQQAKEAARKKTEKN) are disordered. Residues 317–329 (QAKEAARKKTEKN) are compositionally biased toward basic and acidic residues.

Belongs to the TrhO family.

The enzyme catalyses uridine(34) in tRNA + AH2 + O2 = 5-hydroxyuridine(34) in tRNA + A + H2O. Its function is as follows. Catalyzes oxygen-dependent 5-hydroxyuridine (ho5U) modification at position 34 in tRNAs. The protein is tRNA uridine(34) hydroxylase of Francisella tularensis subsp. novicida (strain U112).